A 189-amino-acid chain; its full sequence is Elongation factor P (189 aa).

The protein belongs to the elongation factor P family.

The protein localises to the cytoplasm. It participates in protein biosynthesis; polypeptide chain elongation. In terms of biological role, involved in peptide bond synthesis. Stimulates efficient translation and peptide-bond synthesis on native or reconstituted 70S ribosomes in vitro. Probably functions indirectly by altering the affinity of the ribosome for aminoacyl-tRNA, thus increasing their reactivity as acceptors for peptidyl transferase. The sequence is that of Elongation factor P from Orientia tsutsugamushi (strain Boryong) (Rickettsia tsutsugamushi).